A 216-amino-acid polypeptide reads, in one-letter code: Twisted gastrulation protein homolog 1-A (216 aa).

Residues 1–25 form the signal peptide; that stretch reads MKPSFLHIPAAALLLCSLWILPIYC. Asparagine 52, asparagine 81, and asparagine 145 each carry an N-linked (GlcNAc...) asparagine glycan.

Belongs to the twisted gastrulation protein family. In terms of assembly, binds directly to bmp2, bmp4 and bmp7 and can form a ternary complex with bmps and chordin, thus preventing the binding of bmps to their cell surface receptors. In terms of tissue distribution, posterior defects are induced by overexpression. This may arise through alteration of bmp4 or chrd function in the developing tailbud region.

It is found in the secreted. Involved in dorsal-ventral patterning, permitting peak BMP signaling by antagonizing the residual anti-BMP activity of the cleavage products of chrd. Functions to promote the formation of ventral mesoderm by increasing the activity of bmp7 and other BMPS. Seems to antagonize BMP signaling by forming ternary complexes with chrd and BMPs, thereby preventing BMPs from binding to their receptors. In addition to the anti-BMP function, also has pro-BMP activity, partly mediated by cleavage and degradation of chrd, which releases BMPs from ternary complexes. May be an important modulator of BMP-regulated cartilage development and chondrocyte differentiation. The chain is Twisted gastrulation protein homolog 1-A (twsg1-a) from Xenopus laevis (African clawed frog).